A 66-amino-acid chain; its full sequence is Large ribosomal subunit protein bL33c (66 aa).

It belongs to the bacterial ribosomal protein bL33 family.

The protein localises to the plastid. The protein resides in the chloroplast. This chain is Large ribosomal subunit protein bL33c, found in Calycanthus floridus var. glaucus (Eastern sweetshrub).